Here is a 224-residue protein sequence, read N- to C-terminus: UPF0758 protein VFMJ11_0123 (224 aa).

Positions 102 to 224 (ALTSPEHTKR…IVSFAERGWI (123 aa)) constitute an MPN domain. Positions 173, 175, and 186 each coordinate Zn(2+). The JAMM motif motif lies at 173 to 186 (HNHPSGVAEPSQAD).

It belongs to the UPF0758 family.

The sequence is that of UPF0758 protein VFMJ11_0123 from Aliivibrio fischeri (strain MJ11) (Vibrio fischeri).